A 495-amino-acid chain; its full sequence is MSIGFDRDLYIKMQSRHINERREQIGGKLYLEMGGKLFDDMHASRVLPGFTPDNKIAMLTELKDELEILVAINAKDLERKKTRADLDISYEEDVLRLIDVFRELGFLAEHVVLTQLEDDNYQALTFKQRLERLGLKVAVHRVIPGYPTDARRIVSEDGFGINEYVETTRNLVVVTAPGPGSGKLATCLSQIYGDHQRGIKSGYAKFETFPIWNLPLEHPVNLAYEAATADLDDINIIDPFHLAAYDTKATSYNRDVEVFPLLKTMLEMLSGSSPYKSPTDMGVNMVGSAIIDDAACQEAARQEIVRRYFKALVDERREEQDDTISARIAIVMSKAGCTVEDRRVVARALDVEESTGAPGCAIELNDGRLVTGKTSELLGCSAAMVLNALKELAGIDRSVDLLSPESIEPIQSLKTQHLGSRNPRLHTDEVLIALSVSAANSETARRALDELKNLRGCDVHTTTILGSVDEGIFRNLGVLVTSEPKYQRKALYRKR.

The protein belongs to the UPF0371 family.

The protein is UPF0371 protein cgR_2887 of Corynebacterium glutamicum (strain R).